The chain runs to 552 residues: Cytochrome P450 monooxyhenase eriI (552 aa).

A helical transmembrane segment spans residues 9-26; sequence FALKASAAVAVLLLAAWV. N-linked (GlcNAc...) asparagine glycans are attached at residues asparagine 50 and asparagine 447. Cysteine 495 is a binding site for heme.

It belongs to the cytochrome P450 family. Heme serves as cofactor.

The protein resides in the membrane. It carries out the reaction (-)-cyatha-3,12-diene + reduced [NADPH--hemoprotein reductase] + O2 = erinacol + oxidized [NADPH--hemoprotein reductase] + H2O + H(+). It functions in the pathway secondary metabolite biosynthesis. Cytochrome P450 monooxygenase; part of the gene cluster that mediates the biosynthesis of erinacines, cyathane-xylosides that show unique biological activities, including leishmanicidal activity, stimulating activity for nerve growth-factor synthesis, and agonistic activity toward the kappa opioid receptor. Within the pathway, eriI hydroxylates cyatha-3,12-diene at C-14 of the seven-membered ring to yield erinacol. The first step of the erinacines biosynthesis pathway is catalyzed by the geranylgeranyl diphosphate (GGPP) synthase eriE via conversion of farnesyl pyrophosphate and isopentyl pyrophosphate into geranylgeranyl pyrophosphate (GGPP). GGPP is then substrate of the diterpene cyclase eriG for the production of cyatha-3,12-diene. The cytochrome P450 monooxygenase eriI then hydroxylates cyatha-3,12-diene at C-14 of the seven-membered ring to produce erinacol, which is further hydroxylated at C-15 by the cytochrome P450 monooxygenase eriC to yield cyathadiol. The cytochrome P450 monooxygenase eriA then catalyzes C-11 hydroxylation in the presence of the short chain dehydrogenase/reductase (SDR) eriH, which leads to the production of cyathatriol. The acetyltransferase eriL converts cyathatriol into 11-O-acetyl-cyathatriol. The SDR eriH catalyzes further oxidation of 11-O-acetyl-cyathatriol into 1-O-acetylcyathin A3. Finally, the glycosyl transferase eriJ tranfers xylose from UDP-xylose onto C-14 of 11-O-acetyl-cyathatriol to form eracine Q. EriJ is also able to convert 11-O-acetyl-cyathatriol to eracine Q2 by using UDP-D-glucose as cosubstrate, but at a lower rate. Functionally, cytochrome P450 monooxygenase; part of the gene cluster that mediates the biosynthesis of erinacines, cyathane-xylosides that show unique biological activities, including leishmanicidal activity, stimulating activity for nerve growth-factor synthesis, and agonistic activity toward the kappa opioid receptor. The geranylgeranyl diphosphate (GGPP) synthase eriE catalyzes the first step in erinacines biosynthesis via conversion of farnesyl pyrophosphate and isopentyl pyrophosphate into geranylgeranyl pyrophosphate (GGPP). GGPP is then substrate of the diterpene cyclase eriG for the production of cyatha-3,12-diene. EriG is unable to use geranyl diphosphate (GPP) or farnesyl diphosphate (FPP) as substrates. The cytochrome P450 monooxygenase eriI then hydroxylates cyatha-3,12-diene at C-14 of the seven-membered ring to produce erinacol, which is further hydroxylated at C-15 by the cytochrome P450 monooxygenase eriC to yield cyathadiol. The cytochrome P450 monooxygenase eriA then catalyzes C-11 hydroxylation in the presence of the short chain dehydrogenase/reductase (SDR) eriH, which leads to the production of cyathatriol. The acetyltransferase eriL converts cyathatriol into 11-O-acetyl-cyathatriol. The SDR eriH catalyzes further oxidation of 11-O-acetyl-cyathatriol into 1-O-acetylcyathin A3. Finally, the glycosyl transferase eriJ tranfers xylose from UDP-xylose onto C-14 of 11-O-acetyl-cyathatriol to form eracine Q. EriJ is also able to convert 11-O-acetyl-cyathatriol to eracine Q2 by using UDP-D-glucose as cosubstrate, but at a lower rate. In the absence of eriL and eriJ, the SDR eriH is able to convert cyathatriol to cyathin A3; this is likely a switching mechanism in the biosynthesis of cyathins (C-14 ketogroup)and erinacines (C-14 glycosylated group). The roles of the SDR eriB, the polyprenyl transferase eriF and the dehydrogenase eriK have still to be identified. This is Cytochrome P450 monooxyhenase eriI from Hericium erinaceus (Lion's mane mushroom).